The sequence spans 252 residues: MRILVTNDDGVHAPGLRVLEEIAAALSDDVYVVAPESDQSGVAHSLSLNDPLRLRRISERRYAVKGTPTDCVIMGVRRILDGREPDVVLSGVNSGQNVAEDVIYSGTVAGAMEGAILGIPAIALSQAYGRAGREKAFWSCAQAHAPGLIEKILATGVPANTVVNVNFPDCPPDAVEGVAVTAQGRRGYLVNVDARSDGRGNPYYWIAFDRPFSEPGKGTDVEALAHNRISVTPLRLDITDTPTLTRYAQALL.

The a divalent metal cation site is built by Asp-8, Asp-9, Ser-40, and Asn-93.

The protein belongs to the SurE nucleotidase family. A divalent metal cation is required as a cofactor.

The protein localises to the cytoplasm. It catalyses the reaction a ribonucleoside 5'-phosphate + H2O = a ribonucleoside + phosphate. Its function is as follows. Nucleotidase that shows phosphatase activity on nucleoside 5'-monophosphates. This is 5'-nucleotidase SurE from Methylocella silvestris (strain DSM 15510 / CIP 108128 / LMG 27833 / NCIMB 13906 / BL2).